The primary structure comprises 442 residues: UDP-N-acetylmuramate--L-alanine ligase (442 aa).

Residue 109 to 115 (GAHGKTS) coordinates ATP.

Belongs to the MurCDEF family.

The protein localises to the cytoplasm. The enzyme catalyses UDP-N-acetyl-alpha-D-muramate + L-alanine + ATP = UDP-N-acetyl-alpha-D-muramoyl-L-alanine + ADP + phosphate + H(+). The protein operates within cell wall biogenesis; peptidoglycan biosynthesis. Cell wall formation. The sequence is that of UDP-N-acetylmuramate--L-alanine ligase from Streptococcus pyogenes serotype M49 (strain NZ131).